Consider the following 258-residue polypeptide: Hydroxyacylglutathione hydrolase (258 aa).

7 residues coordinate Zn(2+): His-54, His-56, Asp-58, His-59, His-113, Asp-138, and His-176.

Belongs to the metallo-beta-lactamase superfamily. Glyoxalase II family. In terms of assembly, monomer. It depends on Zn(2+) as a cofactor.

It carries out the reaction an S-(2-hydroxyacyl)glutathione + H2O = a 2-hydroxy carboxylate + glutathione + H(+). Its pathway is secondary metabolite metabolism; methylglyoxal degradation; (R)-lactate from methylglyoxal: step 2/2. Thiolesterase that catalyzes the hydrolysis of S-D-lactoyl-glutathione to form glutathione and D-lactic acid. In Synechococcus sp. (strain ATCC 27144 / PCC 6301 / SAUG 1402/1) (Anacystis nidulans), this protein is Hydroxyacylglutathione hydrolase.